Here is a 202-residue protein sequence, read N- to C-terminus: Putative 3-methyladenine DNA glycosylase (202 aa).

Belongs to the DNA glycosylase MPG family.

The protein is Putative 3-methyladenine DNA glycosylase of Clostridioides difficile (strain 630) (Peptoclostridium difficile).